The chain runs to 347 residues: NADH-quinone oxidoreductase subunit H (347 aa).

8 helical membrane-spanning segments follow: residues 13-33 (LLIL…VAYI), 82-102 (GVFL…WAVI), 115-135 (VGIL…IMGG), 161-181 (IGFV…SDIV), 198-218 (FLDW…ISAL), 248-268 (FLLF…LATI), 283-303 (FTWV…FFGI), and 321-341 (LGWK…AAFL).

Belongs to the complex I subunit 1 family. As to quaternary structure, NDH-1 is composed of 14 different subunits. Subunits NuoA, H, J, K, L, M, N constitute the membrane sector of the complex.

It localises to the cell inner membrane. It catalyses the reaction a quinone + NADH + 5 H(+)(in) = a quinol + NAD(+) + 4 H(+)(out). In terms of biological role, NDH-1 shuttles electrons from NADH, via FMN and iron-sulfur (Fe-S) centers, to quinones in the respiratory chain. The immediate electron acceptor for the enzyme in this species is believed to be ubiquinone. Couples the redox reaction to proton translocation (for every two electrons transferred, four hydrogen ions are translocated across the cytoplasmic membrane), and thus conserves the redox energy in a proton gradient. This subunit may bind ubiquinone. This Mesorhizobium japonicum (strain LMG 29417 / CECT 9101 / MAFF 303099) (Mesorhizobium loti (strain MAFF 303099)) protein is NADH-quinone oxidoreductase subunit H.